The following is a 519-amino-acid chain: Cytochrome P450 monooxygenase apdE (519 aa).

The chain crosses the membrane as a helical span at residues 27 to 47 (FVFFAFVVYSCFTIAVGWVVY). N-linked (GlcNAc...) asparagine glycans are attached at residues N327 and N379. C466 contacts heme. Residue N508 is glycosylated (N-linked (GlcNAc...) asparagine).

Belongs to the cytochrome P450 family. Heme serves as cofactor.

The protein localises to the membrane. It participates in secondary metabolite biosynthesis. Functionally, cytochrome P450 monooxygenase; part of the gene cluster that mediates the biosynthesis of aspyridones. The polyketide-amino acid backbone preaspyridone A is first assembled by the PKS-NRPS hybrid apdA. The assembly of preaspyridone A is initiated by loading of malonyl-CoA onto apdA, followed by decarboxylation to yield the acetyl starter unit. The growing polyketide chain then elongates into a tetraketide. The adpA PKS module catalyzes three Claisen condensations, as well as beta-keto processing and methylation. Alpha-methylation step during polyketide synthesis is a prerequisite and a key checkpoint for chain transfer between PKS and NRPS modules. The downstream NRPS module contains the condensation (C), adenylation (A), and thiolation (T) domains and catalyzes the incorporation of tyrosine via the formation of the L-tyrosinyl-thioester and the amide linkage between L-tyrosinyl-thioester and the tetraketide. The bimodular assembly line is terminated with a reductase (R) domain that facilitates formation and release of the tetramic acid product. Because apdA lacks a designated enoylreductase (ER) domain, the required activity is provided the enoyl reductase apdC. ApdC appears to operate with different stereoselectivity in different PKS cycle. Combined with apdC, apdA is proposed to synthesize preaspyridone A via about 20 enzymatic steps. A number of oxidative steps performed successively by the cytochrome P450 monooxygenases apdE and apdB are required for the conversion of preaspyridone A to aspyridone A. The cytochrome P450 monooxygenase apdE is responsible for the oxidative dephenylation of preaspyridone A. Finally, the predicted FAD-dependent monooxygenase apdD and the acyl-CoA dehydrogenase apdG may be involved in the transformation of aspyridone A into aspyridone B. This chain is Cytochrome P450 monooxygenase apdE, found in Emericella nidulans (strain FGSC A4 / ATCC 38163 / CBS 112.46 / NRRL 194 / M139) (Aspergillus nidulans).